The primary structure comprises 195 residues: Guanylate kinase (195 aa).

A Guanylate kinase-like domain is found at 10–189; the sequence is GRLIVFSAPS…TVDAVATRIA (180 aa). An ATP-binding site is contributed by 17-24; that stretch reads APSGTGKS.

The protein belongs to the guanylate kinase family.

It is found in the cytoplasm. It carries out the reaction GMP + ATP = GDP + ADP. In terms of biological role, essential for recycling GMP and indirectly, cGMP. The chain is Guanylate kinase from Chlorobaculum tepidum (strain ATCC 49652 / DSM 12025 / NBRC 103806 / TLS) (Chlorobium tepidum).